We begin with the raw amino-acid sequence, 55 residues long: uncharacterized protein (55 aa).

A compositionally biased stretch (polar residues) spans 1-15; that stretch reads MVGQEQLESSPLCQH. The interval 1–26 is disordered; the sequence is MVGQEQLESSPLCQHSDNETETKREC. A compositionally biased stretch (basic and acidic residues) spans 16–26; sequence SDNETETKREC.

This is an uncharacterized protein from Escherichia coli (strain K12).